The chain runs to 508 residues: ATP synthase subunit alpha, chloroplastic (508 aa).

Position 173–180 (173–180 (GDRQTGKT)) interacts with ATP.

It belongs to the ATPase alpha/beta chains family. In terms of assembly, F-type ATPases have 2 components, CF(1) - the catalytic core - and CF(0) - the membrane proton channel. CF(1) has five subunits: alpha(3), beta(3), gamma(1), delta(1), epsilon(1). CF(0) has four main subunits: a, b, b' and c.

Its subcellular location is the plastid. The protein localises to the chloroplast thylakoid membrane. It catalyses the reaction ATP + H2O + 4 H(+)(in) = ADP + phosphate + 5 H(+)(out). Produces ATP from ADP in the presence of a proton gradient across the membrane. The alpha chain is a regulatory subunit. This Chara vulgaris (Common stonewort) protein is ATP synthase subunit alpha, chloroplastic.